Reading from the N-terminus, the 37-residue chain is Large ribosomal subunit protein bL36 (37 aa).

The protein belongs to the bacterial ribosomal protein bL36 family.

The chain is Large ribosomal subunit protein bL36 from Legionella pneumophila subsp. pneumophila (strain Philadelphia 1 / ATCC 33152 / DSM 7513).